The chain runs to 528 residues: Folylpolyglutamate synthase (528 aa).

An ATP-binding site is contributed by 104–107 (GKGG). Residues Ser134, Glu208, and His236 each coordinate Mg(2+). The ATP site is built by Arg351 and Asp365.

The protein belongs to the folylpolyglutamate synthase family. It depends on a monovalent cation as a cofactor.

It is found in the mitochondrion inner membrane. The protein resides in the mitochondrion matrix. Its subcellular location is the cytoplasm. The enzyme catalyses (6S)-5,6,7,8-tetrahydrofolyl-(gamma-L-Glu)(n) + L-glutamate + ATP = (6S)-5,6,7,8-tetrahydrofolyl-(gamma-L-Glu)(n+1) + ADP + phosphate + H(+). It functions in the pathway cofactor biosynthesis; tetrahydrofolylpolyglutamate biosynthesis. Catalyzes conversion of folates to polyglutamate derivatives allowing concentration of folate compounds in the cell and the intracellular retention of these cofactors, which are important substrates for most of the folate-dependent enzymes that are involved in one-carbon transfer reactions involved in purine, pyrimidine and amino acid synthesis. The protein is Folylpolyglutamate synthase (met-6) of Neurospora crassa (strain ATCC 24698 / 74-OR23-1A / CBS 708.71 / DSM 1257 / FGSC 987).